Reading from the N-terminus, the 766-residue chain is Ribonuclease Z, mitochondrial (766 aa).

The N-terminal 25 residues, 1-25 (MYLVKSAGSPIYRTLRTLTTSNLMA), are a transit peptide targeting the mitochondrion.

This sequence belongs to the RNase Z family. As to quaternary structure, homodimer. Zn(2+) is required as a cofactor.

Its subcellular location is the nucleus. It is found in the mitochondrion. It carries out the reaction Endonucleolytic cleavage of RNA, removing extra 3' nucleotides from tRNA precursor, generating 3' termini of tRNAs. A 3'-hydroxy group is left at the tRNA terminus and a 5'-phosphoryl group is left at the trailer molecule.. In terms of biological role, zinc phosphodiesterase, which displays some tRNA 3'-processing endonuclease activity of nuclear and mitochondrial pre-tRNA. Probably involved in tRNA maturation, by removing a 3'-trailer from precursor tRNA. May participate in tRNA processing in the developing embryo. The polypeptide is Ribonuclease Z, mitochondrial (Drosophila melanogaster (Fruit fly)).